Consider the following 284-residue polypeptide: Acetylglutamate kinase (284 aa).

Residues 54 to 55, arginine 76, and asparagine 179 contribute to the substrate site; that span reads GG.

It belongs to the acetylglutamate kinase family. ArgB subfamily.

Its subcellular location is the cytoplasm. The catalysed reaction is N-acetyl-L-glutamate + ATP = N-acetyl-L-glutamyl 5-phosphate + ADP. It participates in amino-acid biosynthesis; L-arginine biosynthesis; N(2)-acetyl-L-ornithine from L-glutamate: step 2/4. Its function is as follows. Catalyzes the ATP-dependent phosphorylation of N-acetyl-L-glutamate. This is Acetylglutamate kinase from Sorangium cellulosum (strain So ce56) (Polyangium cellulosum (strain So ce56)).